A 123-amino-acid polypeptide reads, in one-letter code: Small ribosomal subunit protein uS12 (123 aa).

Asp89 carries the post-translational modification 3-methylthioaspartic acid. A disordered region spans residues 104 to 123; that stretch reads TAGVKDRKQARSKYGAKRPK. Basic residues predominate over residues 113-123; that stretch reads ARSKYGAKRPK.

Belongs to the universal ribosomal protein uS12 family. As to quaternary structure, part of the 30S ribosomal subunit. Contacts proteins S8 and S17. May interact with IF1 in the 30S initiation complex.

With S4 and S5 plays an important role in translational accuracy. Functionally, interacts with and stabilizes bases of the 16S rRNA that are involved in tRNA selection in the A site and with the mRNA backbone. Located at the interface of the 30S and 50S subunits, it traverses the body of the 30S subunit contacting proteins on the other side and probably holding the rRNA structure together. The combined cluster of proteins S8, S12 and S17 appears to hold together the shoulder and platform of the 30S subunit. The chain is Small ribosomal subunit protein uS12 from Neisseria meningitidis serogroup C (strain 053442).